We begin with the raw amino-acid sequence, 452 residues long: Ribosomal protein uS12 methylthiotransferase RimO (452 aa).

The MTTase N-terminal domain occupies 5–116; it reads PTIAFSHLGC…IVDVLQRTES (112 aa). Residues Cys14, Cys50, Cys79, Cys154, Cys158, and Cys161 each coordinate [4Fe-4S] cluster. A Radical SAM core domain is found at 140 to 369; the sequence is TTTSAVAYLR…MATQQPIAER (230 aa). The TRAM domain maps to 372–438; that stretch reads RAQIGRLVDV…IYDLHGEVAS (67 aa).

The protein belongs to the methylthiotransferase family. RimO subfamily. [4Fe-4S] cluster serves as cofactor.

The protein localises to the cytoplasm. The enzyme catalyses L-aspartate(89)-[ribosomal protein uS12]-hydrogen + (sulfur carrier)-SH + AH2 + 2 S-adenosyl-L-methionine = 3-methylsulfanyl-L-aspartate(89)-[ribosomal protein uS12]-hydrogen + (sulfur carrier)-H + 5'-deoxyadenosine + L-methionine + A + S-adenosyl-L-homocysteine + 2 H(+). Catalyzes the methylthiolation of an aspartic acid residue of ribosomal protein uS12. The protein is Ribosomal protein uS12 methylthiotransferase RimO of Synechococcus sp. (strain ATCC 27144 / PCC 6301 / SAUG 1402/1) (Anacystis nidulans).